The chain runs to 283 residues: MKLSAIWESKNGLRGSGTCSHRRVSTPDIQSPDCGEGGIGHALALDFKNQGYVVFTTLLAHEPRDHLTDLGIHSFTADVTKDSDIEQLKEAISSLTEGSLSVLVNNAGICYTMTAIDTDVKEVEKMFGVNVFGPMRMVHIFHPLLIKARGKIVNIGSELTDFEASYNATKAALHHWGNTLRVEMKPLGVEVVNVISGEVGTNILKRDHNRKLPEDSFYRPLEKEFMNHVTRTPRTTTPAEYSRSVVIEVMKQHSTAWFWTGASSGIVRFSEQFFPRTLWVNSL.

NADP(+)-binding residues include threonine 57, aspartate 78, asparagine 106, tyrosine 166, lysine 170, valine 199, and threonine 201. Tyrosine 166 (proton acceptor) is an active-site residue. Tyrosine 166 acts as the Proton donor in catalysis. The Lowers pKa of active site Tyr role is filled by lysine 170.

This sequence belongs to the short-chain dehydrogenases/reductases (SDR) family.

It functions in the pathway secondary metabolite biosynthesis. Highly reducing polyketide synthase; part of the gene cluster that mediates the biosynthesis of annullatin D, an alkylated aromatic polyketide with a fused dihydrobenzofuran lactone ring system that exhibits potent agonistic activities toward the cannabinoid receptors. The annullatin backbone 2-hydroxymethyl-3-pentylphenol is assembled from one acetyl-CoA starter unit and 5 malonyl-CoA elongation units by cooperation of the highly reducing polyketide synthase anuA, the short-chain dehydrogenase anuB and the oxidoreductase anuC, before being hydroxylated at the C-5 alkyl chain by the cytochrome P450 monooxygenase anuE to form (8S)-annullatin E. The prenyltransferase anuH subsequently installs one isoprenyl group at the benzene ring to form (8S)-annullatin J. Enzymatic or nonenzymatic dihydro-benzofuran ring formation between the prenyl and the phenolic hydroxyl groups in (8S)-annullatin J results in two diastereomers (2S,9S)-annullatin H and compound 12. The intermediate (2S,9S)-annullatin H is then converted to (2S,9S)-annullatin D by the FAD-linked oxidoreductase anuG-catalyzed five-member lactone ring formation. The isomer 12 acts as a substrate for the short-chain dehydrogenase anuF and is oxidized to (2R)-annullatin F, which is subsequently acetylated by an acetyltransferase leading to (2R)-annullatin G formation. The remaining enzymes identified within the cluster, anuD, anuI and anuJ, seem not to be involved in annullatin biosynthesis. The polypeptide is Short-chain dehydrogenase anuB (Penicillium roqueforti (strain FM164)).